The chain runs to 148 residues: Transcriptional regulator MraZ (148 aa).

SpoVT-AbrB domains follow at residues 5-53 (ETAI…AEKE) and 82-125 (SAVL…SEQA).

This sequence belongs to the MraZ family. Forms oligomers.

The protein localises to the cytoplasm. The protein resides in the nucleoid. The polypeptide is Transcriptional regulator MraZ (Xanthomonas oryzae pv. oryzae (strain MAFF 311018)).